We begin with the raw amino-acid sequence, 539 residues long: MPSPTTVPVATAGRLAEPYIDPAAQVHAIASIIGDVRIAAGVRVAAGVSIRADEGAPFQVGKESILQEGAVIHGLEYGRVLGDDQADYSVWIGQRVAITHKALIHGPAYLGDDCFVGFRSTVFNARVGAGSVIMMHALVQDVEIPPGRYVPSGAIITTQQQADRLPEVRPEDREFARHIIGSPPVIVRSTPAATADFHSTPTPSPLRPSSSEATTVSAYNGQGRLSSEVITQVRSLLNQGYRIGTEHADKRRFRTSSWQPCAPIQSTNERQVLSELENCLSEHEGEYVRLLGIDTNTRSRVFEALIQRPDGSVPESLGSQPVAVASGGGRQSSYASVSGNLSAEVVNKVRNLLAQGYRIGTEHADKRRFRTSSWQSCAPIQSSNERQVLAELENCLSEHEGEYVRLLGIDTASRSRVFEALIQDPQGPVGSAKAAAAPVSSATPSSHSYTSNGSSSSDVAGQVRGLLAQGYRISAEVADKRRFQTSSWQSLPALSGQSEATVLPALESILQEHKGKYVRLIGIDPAARRRVAELLIQKP.

The carbonic anhydrase-like domain stretch occupies residues 1-214 (MPSPTTVPVA…PLRPSSSEAT (214 aa)). Residues 194 to 213 (TADFHSTPTPSPLRPSSSEA) are disordered. One copy of the RbcS-like repeat 1, SSUL1 repeat lies at 226 to 397 (SSEVITQVRS…VLAELENCLS (172 aa)). 2 cysteine pairs are disulfide-bonded: cysteine 261–cysteine 279 and cysteine 377–cysteine 395. The stretch at 341–425 (LSAEVVNKVR…RVFEALIQDP (85 aa)) is one RbcS-like repeat 2, SSUL2 repeat. The segment at 427–459 (GPVGSAKAAAAPVSSATPSSHSYTSNGSSSSDV) is disordered. Residues 431–457 (SAKAAAAPVSSATPSSHSYTSNGSSSS) are compositionally biased toward low complexity. The stretch at 453 to 539 (GSSSSDVAGQ…RVAELLIQKP (87 aa)) is one RbcS-like repeat 3, SSUL3 repeat.

It belongs to the gamma-class carbonic anhydrase family. Probably a homotrimer. Purifies from carboxysomes in complex with both RuBisCO subunits and carbonic anhydrase (ccaA); the complex is probably associated with the carboxysome shell. Interacts with CcmN. Binds holo-RuBisCO (RbcL(8)-RbcS(8)) via its SSUL domains; the SSUL domain binds close to the equitorial domain of RuBisCO between RbcL dimers, with 1 M35 protein per dimer. As to quaternary structure, the short form purifies from carboxysomes in complex with both RuBisCO subunits; the complex is probably associated with the carboxysome shell. Post-translationally, identified as 2 proteins of 58 and 38 kDa by mass spectrometry, called M58 and M35, the shorter protein is translated starting at Val-216. Protease inhibitors do not alter the appearance of M35. In isolated carboxysomes M35 is 4-5 fold more abundant. The first amino acid (equivalent to Val-216) is not seen in Edman degradation, while Tyr-219 and Gln-222 may be post-translationally modified.

It is found in the carboxysome. Functionally, functions as a scaffold protein for the assembly of beta-carboxysomes, initiates carboxysome assembly by coalescing RuBisCO (ribulose bisphosphate carboxylase, rbcL-rbcS). Produced as a full-length (M58) and a shorter form (M35); both forms are required for correct carboxysome assembly and growth. The short form is more abundant. Despite its strong similarity to gamma-class carbonic anhydrase (CA) it does not have detectable CA activity. The M35 isoform is able to condense RuBisCO into a liquid matrix; the presence of disulfide bonds in M35 reduces affinity for RuBisCO, while mutating all 4 Cys to Ser causes a 4-fold increase in doubling time, more than 15% increase in CO(2) requirement, and abnormal carboxysomes. Its function is as follows. Beta-carboxysome assembly initiates when soluble RuBisCO is condensed into a liquid matrix in a pre-carboxysome by the RbcS-like domains of probably both CcmM58 and CcmM35. CcmN interacts with the N-terminus of CcmM58, and then recruits the CcmK2 major shell protein plus other less abundant CcmK proteins via CcmN's encapsulation peptide. Shell formation requires CcmK proteins and CcmO. CcmL caps the otherwise elongated carboxysome. Once fully encapsulated carboxysomes are formed, they migrate within the cell probably via interactions with the cytoskeleton. The chain is Carboxysome assembly protein CcmM from Synechococcus elongatus (strain ATCC 33912 / PCC 7942 / FACHB-805) (Anacystis nidulans R2).